The sequence spans 726 residues: tRNA endonuclease ANKZF1 (726 aa).

A disordered region spans residues 40-61; sequence LARAPRTSCSGSGERESPERKL. The segment covering 52–61 has biased composition (basic and acidic residues); that stretch reads GERESPERKL. A C2H2-type zinc finger spans residues 72 to 96; that stretch reads LFCSTCDQTFQNHQEQREHYKLDWH. Over residues 120 to 130 the composition is skewed to low complexity; sequence STGDLSSISGS. Residues 120–141 form a disordered region; that stretch reads STGDLSSISGSEDSDSASEEDL. Acidic residues predominate over residues 131–141; it reads EDSDSASEEDL. The 144-residue stretch at 203–346 folds into the VLRF1 domain; that stretch reads GPRDCVVLMA…QRVLHKLTTL (144 aa). The active site involves Gln246. 3 positions are modified to phosphoserine: Ser258, Ser361, and Ser398. Disordered stretches follow at residues 387 to 409 and 436 to 474; these read DEKE…EGED and RRRR…SSQA. Over residues 436 to 445 the composition is skewed to basic residues; that stretch reads RRRRKRNKKE. Low complexity predominate over residues 457–473; that stretch reads TLLQQTQEEEPSTQSSQ. The ANK 1 repeat unit spans residues 493 to 526; the sequence is ELWNALLAACRAGDVGVLKLQLAPSPADPRVLSL. A Phosphoserine modification is found at Ser533. Residues 534-563 form an ANK 2 repeat; the sequence is GGFTLLHAAAAAGRGSVVRLLLEAGADPTV. Residues 588 to 656 are disordered; that stretch reads MEKNPDAYDY…RRFAALSDRE (69 aa). Thr607 carries the phosphothreonine modification. A coiled-coil region spans residues 609–659; the sequence is EMEARQATRKREQKAARRQREEQQQRQQEQEEREREEQRRFAALSDREKRA. The segment covering 610 to 656 has biased composition (basic and acidic residues); sequence MEARQATRKREQKAARRQREEQQQRQQEQEEREREEQRRFAALSDRE. A VCP/p97-interacting motif (VIM) region spans residues 654–666; sequence DREKRALAAERRL. Residues Ser675 and Ser680 each carry the phosphoserine modification.

It belongs to the ANKZF1/VMS1 family. Interacts (via VIM motif) with VCP.

The protein localises to the cytoplasm. Endonuclease that cleaves polypeptidyl-tRNAs downstream of the ribosome-associated quality control (RQC) pathway to release incompletely synthesized polypeptides for degradation. The RQC pathway disassembles aberrantly stalled translation complexes to recycle or degrade the constituent parts. ANKZF1 acts downstream disassembly of stalled ribosomes and specifically cleaves off the terminal 3'-CCA nucleotides universal to all tRNAs from polypeptidyl-tRNAs, releasing (1) ubiquitinated polypeptides from 60S ribosomal subunit for degradation and (2) cleaved tRNAs. ANKZF1-cleaved tRNAs are then repaired and recycled by ELAC1 and TRNT1. Also plays a role in the cellular response to hydrogen peroxide and in the maintenance of mitochondrial integrity under conditions of cellular stress. The chain is tRNA endonuclease ANKZF1 from Homo sapiens (Human).